Here is a 945-residue protein sequence, read N- to C-terminus: Argonaute protein wago-1 (945 aa).

Residues 1 to 20 (MSPHPPQPHPPMPPMPPVTA) show a composition bias toward pro residues. Residues 1 to 41 (MSPHPPQPHPPMPPMPPVTAPPGAMTPMPPVPADAQKLHQS) form a disordered region. The region spanning 322–432 (TVIQKLFDIT…FPAELMTVSR (111 aa)) is the PAZ domain. Residues 636 to 899 (VKDGKRLTLE…PLYVANEYAK (264 aa)) form the Piwi domain.

It belongs to the Argonaute family. WAGO subfamily. As to quaternary structure, interacts with rde-12. Interacts with znfx-1. As to expression, enriched in sperm and oocytes.

It localises to the cytoplasmic granule. In terms of biological role, argonaute protein which is involved in the endogenous small interfering RNA (endo-siRNA) pathway. Interacts with secondary 22G-RNAs, which are RNA-dependent RNA polymerase-derived endo-siRNAs, typically 22 nucleotides in length with a 5'guanosine residue. In the germline, functions in a genome surveillance system to silence transposons and aberrant transcripts. This Caenorhabditis elegans protein is Argonaute protein wago-1.